The sequence spans 292 residues: Nitrogenase iron protein 1 (292 aa).

12–19 contacts ATP; that stretch reads GKGGIGKS. A [4Fe-4S] cluster-binding site is contributed by cysteine 101. Position 104 is an ADP-ribosylarginine; by dinitrogenase reductase ADP-ribosyltransferase (arginine 104). Cysteine 135 provides a ligand contact to [4Fe-4S] cluster.

The protein belongs to the NifH/BchL/ChlL family. Homodimer. [4Fe-4S] cluster is required as a cofactor. Post-translationally, the reversible ADP-ribosylation of Arg-104 inactivates the nitrogenase reductase and regulates nitrogenase activity.

The enzyme catalyses N2 + 8 reduced [2Fe-2S]-[ferredoxin] + 16 ATP + 16 H2O = H2 + 8 oxidized [2Fe-2S]-[ferredoxin] + 2 NH4(+) + 16 ADP + 16 phosphate + 6 H(+). In terms of biological role, the key enzymatic reactions in nitrogen fixation are catalyzed by the nitrogenase complex, which has 2 components: the iron protein and the molybdenum-iron protein. This is Nitrogenase iron protein 1 (nifH1) from Paenibacillus durus (Paenibacillus azotofixans).